The following is an 870-amino-acid chain: Rho GTPase-activating protein 7 (870 aa).

Residues 18 to 125 form the PH domain; the sequence is TVFKSGPLFI…WKTALEQALA (108 aa). A Rho-GAP domain is found at 167 to 367; sequence LALEDIDGSP…VLLEDYGSIF (201 aa). 2 disordered regions span residues 378-432 and 446-465; these read STES…SGCT and DSDI…SNIR. Acidic residues predominate over residues 407–417; the sequence is NEVEPVTDDDN. A coiled-coil region spans residues 569 to 693; it reads GEDELAIQRL…HQLNQQRQTH (125 aa). Residues 736–793 form a disordered region; sequence HEENVLGAEWRNSKGAGSFGVGNSRQPSRKQIPESTNTTDSKISEESGKISVDKLSSI. Positions 777 to 787 are enriched in basic and acidic residues; that stretch reads KISEESGKISV.

Functionally, acts as a GTPase activator for the Rac-type GTPase by converting it to an inactive GDP-bound state. This Arabidopsis thaliana (Mouse-ear cress) protein is Rho GTPase-activating protein 7 (ROPGAP7).